We begin with the raw amino-acid sequence, 331 residues long: MGSSGLARLQGLFAVYKPPGLKWLHLRETVELQLLKGLNAQQPPAPDQRVRFLLGPVEGSEEKKLTLRATNVPSLTTHRLVRGPAFTNLKIGVGHRLDVQASGVLVLAVGHGRSLLTDMYDAHLTKDYTVRGLLGKATDNFCEDGRLIEKTTYDHVTRERLDRILAVIQGSHQKALVMYSNLDLKSQEAYEMAVQGVIRPMNKSPMLISGIRCLHFAPPEFLLEVQCMHETQQQLRKLVHEIGLELKTSAVCTQVRRTRDGFFGLDDALLRTQWDLHNIQDAIQAAAPRVAAELQKNLSLKLGHHQLPSTGQPWGLKDPSSTLELESCSGQ.

Asp98 acts as the Nucleophile in catalysis. The interval 309 to 331 (STGQPWGLKDPSSTLELESCSGQ) is disordered. Positions 319 to 331 (PSSTLELESCSGQ) are enriched in polar residues.

It belongs to the pseudouridine synthase TruB family. As to quaternary structure, forms a regulatory protein-RNA complex, consisting of RCC1L, NGRN, RPUSD3, RPUSD4, TRUB2, FASTKD2 and 16S mt-rRNA.

It localises to the mitochondrion matrix. The catalysed reaction is a uridine in mRNA = a pseudouridine in mRNA. The enzyme catalyses uridine(55) in tRNA = pseudouridine(55) in tRNA. Its function is as follows. Minor enzyme contributing to the isomerization of uridine to pseudouridine (pseudouridylation) of specific mitochondrial mRNAs (mt-mRNAs) such as COXI and COXIII mt-mRNAs. As a component of a functional protein-RNA module, consisting of RCC1L, NGRN, RPUSD3, RPUSD4, TRUB2, FASTKD2 and 16S mitochondrial ribosomal RNA (16S mt-rRNA), controls 16S mt-rRNA abundance and is required for intra-mitochondrial translation. Also catalyzes pseudouridylation of some tRNAs, including synthesis of pseudouridine(55) from uracil-55, in the psi GC loop of a subset of tRNAs. In Mus musculus (Mouse), this protein is Pseudouridylate synthase TRUB2, mitochondrial.